The chain runs to 299 residues: Pyridoxal 5'-phosphate synthase subunit PdxS (299 aa).

D24 lines the D-ribose 5-phosphate pocket. K81 serves as the catalytic Schiff-base intermediate with D-ribose 5-phosphate. Position 153 (G153) interacts with D-ribose 5-phosphate. D-glyceraldehyde 3-phosphate is bound at residue R165. D-ribose 5-phosphate-binding positions include G219 and 240–241 (GS).

The protein belongs to the PdxS/SNZ family. As to quaternary structure, in the presence of PdxT, forms a dodecamer of heterodimers.

It catalyses the reaction aldehydo-D-ribose 5-phosphate + D-glyceraldehyde 3-phosphate + L-glutamine = pyridoxal 5'-phosphate + L-glutamate + phosphate + 3 H2O + H(+). It functions in the pathway cofactor biosynthesis; pyridoxal 5'-phosphate biosynthesis. Functionally, catalyzes the formation of pyridoxal 5'-phosphate from ribose 5-phosphate (RBP), glyceraldehyde 3-phosphate (G3P) and ammonia. The ammonia is provided by the PdxT subunit. Can also use ribulose 5-phosphate and dihydroxyacetone phosphate as substrates, resulting from enzyme-catalyzed isomerization of RBP and G3P, respectively. The protein is Pyridoxal 5'-phosphate synthase subunit PdxS of Methanococcus vannielii (strain ATCC 35089 / DSM 1224 / JCM 13029 / OCM 148 / SB).